A 1516-amino-acid polypeptide reads, in one-letter code: Receptor-type tyrosine-protein phosphatase S (1516 aa).

The first 28 residues, 1 to 28, serve as a signal peptide directing secretion; the sequence is MRILPSPGMPALLSLVSLLSVLLMGCVA. Over 29 to 854 the chain is Extracellular; it reads ESPPVFIKKP…PQPIIDGEEG (826 aa). 3 Ig-like C2-type domains span residues 32–122, 134–223, and 235–317; these read PVFI…AKLT, PNID…ANLY, and PRFS…AQIT. Cystine bridges form between Cys53-Cys106 and Cys155-Cys206. An important for binding to glycosaminoglycan chains region spans residues 67–71; it reads KKGKK. 2 N-linked (GlcNAc...) asparagine glycosylation sites follow: Asn253 and Asn298. A disulfide bridge links Cys256 with Cys301. 4 Fibronectin type-III domains span residues 324–414, 419–513, 517–606, and 608–692; these read APGT…TGEQ, APRN…TQQG, QPMN…TLQS, and LPKN…TAAN. A helical membrane pass occupies residues 855–875; sequence LIWVIGPVLAVVFIICIVIAI. Residues 876–1516 are Cytoplasmic-facing; sequence LLYKNKRKDS…YLGSFDHYAT (641 aa). Tyrosine-protein phosphatase domains are found at residues 961–1216 and 1248–1507; these read LSQE…LLEA and MELE…ALEY. Active-site phosphocysteine intermediate residues include Cys1157 and Cys1448.

The protein belongs to the protein-tyrosine phosphatase family. Receptor class 2A subfamily. Homodimer. Binding to large heparan sulfate proteoglycan structures promotes oligomerization. Binding to chondroitin sulfate proteoglycan does not lead to oligomerization. Interacts (via Ig-like domains) with NTRK1 and NTRK3, but does not form detectable complexes with NTRK2. Interacts (via extracellular domain) with the heparan sulfate proteoglycans AGRN and COL18A1. A cleavage occurs, separating the extracellular domain from the transmembrane segment. This process called 'ectodomain shedding' is thought to be involved in receptor desensitization, signal transduction and/or membrane localization. As to expression, detected in embryonic brain, dorsal root ganglion and spinal cord. Detected in embryonic retina (at protein level). Detected in embryonic brain, spinal cord, dorsal root ganglion, trigeminal ganglion, ganglia associated with the precardinal vein and vagus nerve, the inner and outer nuclear layer of the retina, limb, breast muscle, heart, gut and lung.

It localises to the cell membrane. The protein resides in the cell projection. It is found in the axon. The protein localises to the perikaryon. Its subcellular location is the cytoplasmic vesicle. It localises to the secretory vesicle. The protein resides in the synaptic vesicle membrane. It is found in the synapse. The protein localises to the synaptosome. Its subcellular location is the postsynaptic density. It localises to the neuron projection. The protein resides in the growth cone. It catalyses the reaction O-phospho-L-tyrosyl-[protein] + H2O = L-tyrosyl-[protein] + phosphate. Functionally, cell surface receptor that binds to glycosaminoglycans, including chondroitin sulfate proteoglycans and heparan sulfate proteoglycans. Binding to chondroitin sulfate and heparan sulfate proteoglycans has opposite effects on PTPRS oligomerization and regulation of neurite outgrowth. Contributes to the inhibition of neurite and axonal outgrowth by chondroitin sulfate proteoglycans, also after nerve transection. Plays a role in stimulating neurite outgrowth in response to the heparan sulfate proteoglycan GPC2. Required for normal brain development, especially for normal development of the pituitary gland and the olfactory bulb. Functions as tyrosine phosphatase. Mediates dephosphorylation of NTRK1, NTRK2 and NTRK3. Plays a role in down-regulation of signaling cascades that lead to the activation of Akt and MAP kinases. Down-regulates TLR9-mediated activation of NF-kappa-B, as well as production of TNF, interferon alpha and interferon beta. This is Receptor-type tyrosine-protein phosphatase S (PTPRS) from Gallus gallus (Chicken).